We begin with the raw amino-acid sequence, 282 residues long: HTH-type transcriptional activator RhaR (282 aa).

The HTH araC/xylS-type domain occupies 179–277 (DKLITRLAAS…GMTPSQWRHL (99 aa)). DNA-binding regions (H-T-H motif) lie at residues 196–217 (DKFC…RQQT) and 244–267 (ISDI…TRET).

Binds DNA as a dimer.

It is found in the cytoplasm. Functionally, activates expression of the rhaSR operon in response to L-rhamnose. The chain is HTH-type transcriptional activator RhaR from Shigella flexneri serotype 5b (strain 8401).